An 846-amino-acid chain; its full sequence is MAEITVGQLAQQTNKEVDALLKQLKSFGIEKSSEKDTLTPTEMKTLLEKINSAKNTATRKKVTSVKLDGKHKINVSVKRKRRVAKKMEQQESTTLEQPQELETMVQEVSQQVDIVKEQDNIEQIVENKEAVKVQEQRQAEIAKPVIKDSGFKITAMPEIKIEEIVAEDDEGLAASDKQAKKKAAKKVFSEAVNTNTKYKCEEEEKKSKAKKAGGKGFKKANPRQLSQLAGDLESFDEFGAKKGKLKAPKVKKQEFTKPVENTVRTVEIHEGITVSELAQKMAVKGAEIVKVLFNMGVMATINQSLDQDTAILIVEEMGHKYTLHNENALEEAVTIVDRSSYKKISRAPVVTIMGHVDHGKTSLLDYIRQTRVVAGEAGGITQHIGAYSVKTDKGSITFLDTPGHEAFTSMRARGAKSTDIVILVVAADDGVMPQTEEAIQHAKAARVPIVVAVNKIDKPEADSDKVISELAQRNVIPESWGGDVMFVNVSAKTGEGVADLLEAVLLQSEVLELEAFAEGLAEGVVIESRLEKGRGPVATVLVQNGNLKQGDNILCGTEYGRVRAMHNDLGKKIKAAGPATPVEILGLSGVPAAGDEMVVIENEKKAKELAAQRSQKQKEAKIAQEQSLKLSNMFNNMGKEGEQQVLKIILKGDVQGSVEAIRESLLKLSTDEVKVDIIASGIGAITSSDVTLAVASTAVVIGFNVRADSAAKKLAETDGVEFRYYNIIYDLIDDVKKAMSGLLSPEMKEQIIGIAEVREVYRSSKFGSIAGCMVIEGVVKRTNPIRVLRNNVVIYEGTLESLKRFKDDASEVKKGLECGIGVKNYNDVREGDQIEVFEVIEVAKEL.

The tr-type G domain occupies 345–512; sequence SRAPVVTIMG…AVLLQSEVLE (168 aa). The segment at 354–361 is G1; sequence GHVDHGKT. 354 to 361 contributes to the GTP binding site; that stretch reads GHVDHGKT. The G2 stretch occupies residues 379–383; it reads GITQH. Positions 400–403 are G3; that stretch reads DTPG. Residues 400–404 and 454–457 each bind GTP; these read DTPGH and NKID. The tract at residues 454-457 is G4; the sequence is NKID. Positions 490-492 are G5; that stretch reads SAK.

This sequence belongs to the TRAFAC class translation factor GTPase superfamily. Classic translation factor GTPase family. IF-2 subfamily.

It localises to the cytoplasm. Its function is as follows. One of the essential components for the initiation of protein synthesis. Protects formylmethionyl-tRNA from spontaneous hydrolysis and promotes its binding to the 30S ribosomal subunits. Also involved in the hydrolysis of GTP during the formation of the 70S ribosomal complex. This Francisella tularensis subsp. holarctica (strain FTNF002-00 / FTA) protein is Translation initiation factor IF-2.